The primary structure comprises 466 residues: Asparagine--tRNA ligase (466 aa).

Belongs to the class-II aminoacyl-tRNA synthetase family. In terms of assembly, homodimer.

The protein localises to the cytoplasm. The catalysed reaction is tRNA(Asn) + L-asparagine + ATP = L-asparaginyl-tRNA(Asn) + AMP + diphosphate + H(+). This is Asparagine--tRNA ligase from Klebsiella pneumoniae subsp. pneumoniae (strain ATCC 700721 / MGH 78578).